Consider the following 456-residue polypeptide: GTP cyclohydrolase 1 (456 aa).

Residues C340, H343, and C412 each contribute to the Zn(2+) site.

This sequence belongs to the GTP cyclohydrolase I family. As to quaternary structure, homodimer. In terms of tissue distribution, expressed in leaves and unripe fruits.

The enzyme catalyses GTP + H2O = 7,8-dihydroneopterin 3'-triphosphate + formate + H(+). It functions in the pathway cofactor biosynthesis; 7,8-dihydroneopterin triphosphate biosynthesis; 7,8-dihydroneopterin triphosphate from GTP: step 1/1. GTP cyclohydrolase 1 is the first enzyme in the biosynthetic pathway leading to folic acid. This chain is GTP cyclohydrolase 1 (GCH1), found in Solanum lycopersicum (Tomato).